The primary structure comprises 333 residues: MIDTTLPLTDIHRHLDGNIRPQTILELGRQYNISLPAQSLETLIPHVQVIANEPDLVSFLTKLDWGVKVLASLDACRRVAFENIEDAARNGLRYVELRFSPGYMAMAHKLPVAGVVEAVIDGVREGCRTFGVQAKLIGIMSRTFGEAACQQELEAFLAHRDQITALDLAGDELGFPGSLFLSHFNRARDAGWHITVHAGEAAGPESIWQAIRELGAERIGHGVKAIEDRALMDFLAEQQIGIESCLTSNIQTSTVAELAAHPLKTFLEHGIRASINTDDPGVQGVDIIHEYTVAAPAAGLSREQIRQAQINGLEMAFLSAEEKRALREKVAAK.

Positions 12 and 14 each coordinate Zn(2+). Histidine 14, aspartate 16, and glycine 170 together coordinate substrate. Histidine 197 serves as a coordination point for Zn(2+). Catalysis depends on glutamate 200, which acts as the Proton donor. Aspartate 278 serves as a coordination point for Zn(2+). Aspartate 279 serves as a coordination point for substrate.

It belongs to the metallo-dependent hydrolases superfamily. Adenosine and AMP deaminases family. Adenosine deaminase subfamily. Zn(2+) is required as a cofactor.

The enzyme catalyses adenosine + H2O + H(+) = inosine + NH4(+). The catalysed reaction is 2'-deoxyadenosine + H2O + H(+) = 2'-deoxyinosine + NH4(+). Its function is as follows. Catalyzes the hydrolytic deamination of adenosine and 2-deoxyadenosine. The polypeptide is Adenosine deaminase (Shigella flexneri serotype 5b (strain 8401)).